Consider the following 232-residue polypeptide: Ureidoacrylate amidohydrolase RutB (232 aa).

Residue aspartate 26 is the Proton acceptor of the active site. The active site involves lysine 135. Cysteine 168 acts as the Nucleophile in catalysis.

The protein belongs to the isochorismatase family. RutB subfamily.

The enzyme catalyses (Z)-3-ureidoacrylate + H2O + H(+) = (Z)-3-aminoacrylate + NH4(+) + CO2. It catalyses the reaction (Z)-3-ureidoacrylate + H2O = (Z)-3-aminoacrylate + carbamate + H(+). The catalysed reaction is (Z)-2-methylureidoacrylate + H2O + H(+) = (Z)-2-methylaminoacrylate + NH4(+) + CO2. Functionally, hydrolyzes ureidoacrylate to form aminoacrylate and carbamate. The carbamate hydrolyzes spontaneously, thereby releasing one of the nitrogen atoms of the pyrimidine ring as ammonia and one of its carbon atoms as CO2. The protein is Ureidoacrylate amidohydrolase RutB of Cronobacter sakazakii (strain ATCC BAA-894) (Enterobacter sakazakii).